Reading from the N-terminus, the 2677-residue chain is Probable helicase senataxin (2677 aa).

Lys-339 is covalently cross-linked (Glycyl lysine isopeptide (Lys-Gly) (interchain with G-Cter in SUMO1)). Phosphoserine occurs at positions 615, 642, and 878. Lys-894 participates in a covalent cross-link: Glycyl lysine isopeptide (Lys-Gly) (interchain with G-Cter in SUMO2). Phosphoserine is present on residues Ser-911, Ser-947, Ser-956, Ser-1017, and Ser-1019. Residues Lys-1056 and Lys-1063 each participate in a glycyl lysine isopeptide (Lys-Gly) (interchain with G-Cter in SUMO2) cross-link. 2 disordered regions span residues 1158–1219 and 1237–1258; these read KKPK…TTVS and PVSK…RSSN. The span at 1176–1187 shows a compositional bias: polar residues; the sequence is PSSSVRNEGQSD. The span at 1188–1205 shows a compositional bias: basic and acidic residues; the sequence is TNKRDLVGNDFKSIDRRT. Positions 1206-1219 are enriched in polar residues; it reads STPNSRIQRATTVS. Position 1330 is a phosphoserine (Ser-1330). Residues Lys-1340 and Lys-1341 each participate in a glycyl lysine isopeptide (Lys-Gly) (interchain with G-Cter in SUMO2) cross-link. The disordered stretch occupies residues 1351 to 1385; sequence QRQIRPKSQKNRRRLSDCESTDVKRAGSHTAQNSD. The segment covering 1354–1363 has biased composition (basic residues); sequence IRPKSQKNRR. A compositionally biased stretch (basic and acidic residues) spans 1364–1375; sequence RLSDCESTDVKR. Phosphoserine is present on Ser-1366. A Glycyl lysine isopeptide (Lys-Gly) (interchain with G-Cter in SUMO2) cross-link involves residue Lys-1415. Ser-1489 is modified (phosphoserine). The tract at residues 1579–1604 is disordered; that stretch reads FRKPGLPPPASKPLRPTTKIFSSKST. Residues Ser-1621, Ser-1623, and Ser-1663 each carry the phosphoserine modification. 1963–1970 is an ATP binding site; sequence GPPGTGKS. Residues 2070–2087 carry the Bipartite nuclear localization signal motif; sequence KKELPSHVQAMHKRKEFL. Residues 2105–2136 adopt a coiled-coil conformation; it reads REIQRQELDENISKVSKERQELASKIKEVQGR. Phosphothreonine is present on Thr-2474. Disordered stretches follow at residues 2474-2496, 2556-2577, and 2597-2677; these read THPP…SKLD, WDPQ…EPGF, and LSSH…RKLL. The span at 2560-2573 shows a compositional bias: pro residues; that stretch reads PSSPQHPGATPPTG. Residues 2628–2671 are compositionally biased toward basic and acidic residues; the sequence is ELCHRREARAFSEGEQEKCGSETHHTRRNSRWDKRTLEQEDSSS. The tract at residues 2661 to 2677 is necessary for nuclear localization; the sequence is KRTLEQEDSSSKKRKLL.

The protein belongs to the DNA2/NAM7 helicase family. Homodimer. Interacts with PER2; the interaction inhibits termination of circadian target genes. Interacts with CHD4, POLR2A, PRKDC and TRIM28. Interacts with UBE2I. Interacts (via N-terminus domain) with EXOSC9 (via C-terminus region); the interaction enhances SETX sumoylation. Interacts with NCL (via N-terminus domain). Interacts with PABPN1, PABPC1 and SF3B1. Interacts with SMN1/SMN2 and POLR2A; SMN1/SMN2 recruits SETX to POLR2A. Post-translationally, ubiquitinated. Sumoylated preferentially with SUMO2 or SUMO3. Highly expressed in skeletal muscle. Expressed in heart, fibroblast, placenta and liver. Weakly expressed in brain and lung. Expressed in the cortex of the kidney (highly expressed in tubular epithelial cells but low expression in the glomerulus).

It is found in the nucleus. The protein localises to the nucleoplasm. The protein resides in the nucleolus. It localises to the cytoplasm. Its subcellular location is the chromosome. It is found in the telomere. The protein localises to the cell projection. The protein resides in the axon. It localises to the growth cone. Functionally, probable RNA/DNA helicase involved in diverse aspects of RNA metabolism and genomic integrity. Plays a role in transcription regulation by its ability to modulate RNA Polymerase II (Pol II) binding to chromatin and through its interaction with proteins involved in transcription. Contributes to the mRNA splicing efficiency and splice site selection. Required for the resolution of R-loop RNA-DNA hybrid formation at G-rich pause sites located downstream of the poly(A) site, allowing XRN2 recruitment and XRN2-mediated degradation of the downstream cleaved RNA and hence efficient RNA polymerase II (RNAp II) transcription termination. Required for the 3' transcriptional termination of PER1 and CRY2, thus playing an important role in the circadian rhythm regulation. Involved in DNA double-strand breaks damage response generated by oxidative stress. In association with RRP45, targets the RNA exosome complex to sites of transcription-induced DNA damage. Plays a role in the development and maturation of germ cells: essential for male meiosis, acting at the interface of transcription and meiotic recombination, and in the process of gene silencing during meiotic sex chromosome inactivation (MSCI). May be involved in telomeric stability through the regulation of telomere repeat-containing RNA (TERRA) transcription. Plays a role in neurite outgrowth in hippocampal cells through FGF8-activated signaling pathways. Inhibits retinoic acid-induced apoptosis. This is Probable helicase senataxin from Homo sapiens (Human).